A 196-amino-acid chain; its full sequence is Molybdenum cofactor guanylyltransferase (196 aa).

GTP contacts are provided by residues 14–16 (LAG), Lys27, Asp73, and Asp106. Residue Asp106 participates in Mg(2+) binding.

It belongs to the MobA family. As to quaternary structure, monomer. It depends on Mg(2+) as a cofactor.

Its subcellular location is the cytoplasm. The enzyme catalyses Mo-molybdopterin + GTP + H(+) = Mo-molybdopterin guanine dinucleotide + diphosphate. In terms of biological role, transfers a GMP moiety from GTP to Mo-molybdopterin (Mo-MPT) cofactor (Moco or molybdenum cofactor) to form Mo-molybdopterin guanine dinucleotide (Mo-MGD) cofactor. This Acidiphilium cryptum (strain JF-5) protein is Molybdenum cofactor guanylyltransferase.